The primary structure comprises 520 residues: Maturase K (520 aa).

It belongs to the intron maturase 2 family. MatK subfamily.

The protein resides in the plastid. Its subcellular location is the chloroplast. Usually encoded in the trnK tRNA gene intron. Probably assists in splicing its own and other chloroplast group II introns. This is Maturase K from Iris cristata (Dwarf crested iris).